The primary structure comprises 337 residues: MASWNHKHIIDLAAFSLEDYQNVLELANRFKALPKSGARKLPALQGRFIAILFFEPSTRTRTSFEIAAKRLSADVQTFSASTSSLTKGETPLDTALTYVAMGADTLVIRHSSSGVPEQIAKSLEKAGKKTAILNGGDGLHSHPSQALLDLFTLVNFFEPSKPDIKSIKGKRIAIVGDILHSRVARSNLWSLTGCGADVILCGPKSLLPNDFVDFVSSPPPGQLIDPIKNRGKVMISRSLKETLQQSDAVITLRLQKERMNQNLLTNLGSYHREYGISRRILQNFRKEIPVLHPGPVNRGIEISSELLDDQSICLTQEQVKNGIPIRMALLYLLMASK.

Positions 59 and 60 each coordinate carbamoyl phosphate. Lys87 is a binding site for L-aspartate. Residues Arg109, His142, and Gln145 each contribute to the carbamoyl phosphate site. Positions 182 and 253 each coordinate L-aspartate. 2 residues coordinate carbamoyl phosphate: Gly294 and Pro295.

Belongs to the aspartate/ornithine carbamoyltransferase superfamily. ATCase family. Heterododecamer (2C3:3R2) of six catalytic PyrB chains organized as two trimers (C3), and six regulatory PyrI chains organized as three dimers (R2).

It carries out the reaction carbamoyl phosphate + L-aspartate = N-carbamoyl-L-aspartate + phosphate + H(+). It functions in the pathway pyrimidine metabolism; UMP biosynthesis via de novo pathway; (S)-dihydroorotate from bicarbonate: step 2/3. Catalyzes the condensation of carbamoyl phosphate and aspartate to form carbamoyl aspartate and inorganic phosphate, the committed step in the de novo pyrimidine nucleotide biosynthesis pathway. The polypeptide is Aspartate carbamoyltransferase catalytic subunit (Prochlorococcus marinus (strain MIT 9211)).